Reading from the N-terminus, the 346-residue chain is Glucose-6-phosphatase 3 (346 aa).

Over 1–24 (MESTLSAGIIMAEALQNRLPGLEN) the chain is Lumenal. The chain crosses the membrane as a helical span at residues 25–45 (MWLWVTFLGDPKNLFQFCFPA). Residues 46-56 (AYYASRRLGIS) lie on the Cytoplasmic side of the membrane. A helical transmembrane segment spans residues 57-77 (VLWITFIAEWLNLVFKWFLFG). Over 78-108 (DRPFWWVHESGYSTQTPIQIHQFPSSCETGP) the chain is Lumenal. Substrate is bound at residue Arg-79. Residues 109-129 (GSPSGHCMITGAALWPVMTAI) traverse the membrane as a helical segment. The Proton donor role is filled by His-114. Residues 130–138 (SSQVASRSR) lie on the Cytoplasmic side of the membrane. The chain crosses the membrane as a helical span at residues 139–159 (SPWVRVIPGLAYCTFLLAVGL). Residues 160 to 167 (SRVFLLAH) are Lumenal-facing. Arg-161 is a substrate binding site. His-167 serves as the catalytic Nucleophile. Residues 168–186 (FPHQVLGGLIVGAALGWLM) form a helical membrane-spanning segment. Over 187-197 (SPRVPMERELS) the chain is Cytoplasmic. A helical membrane pass occupies residues 198–218 (FYGLTALALMLGASLMYWTLF). At 219–254 (TLGLDLSWSINLASKWCERPEWVHMDSRPFASLSRD) the chain is on the lumenal side. Residues 255-273 (SGSALGLGIALHTPCYAQI) traverse the membrane as a helical segment. At 274 to 283 (RRAHLGNGQK) the chain is on the cytoplasmic side. The chain crosses the membrane as a helical span at residues 284–304 (IACFVLAMGLLVFLEWLGYPP). Residues 305-307 (QIS) lie on the Lumenal side of the membrane. Residues 308-328 (LFYIFNFLKYTLWPCLVLALV) form a helical membrane-spanning segment. Residues 329-346 (PWVVHTLSDQEAPPIRSS) lie on the Cytoplasmic side of the membrane.

The protein belongs to the glucose-6-phosphatase family. In terms of tissue distribution, widely expressed. Highly expressed in heart and testis and to a lower extent in spleen, stomach, small intestine, skeletal muscle and uterus. Expressed in muscle, brain, thymus, lung, kidney, spleen and pancreas (at protein level). In the brain, expressed in astrocytes (at protein level).

The protein localises to the endoplasmic reticulum membrane. It carries out the reaction D-glucose 6-phosphate + H2O = D-glucose + phosphate. It functions in the pathway carbohydrate biosynthesis; gluconeogenesis. With respect to regulation, inhibited by vanadate. Its function is as follows. Hydrolyzes glucose-6-phosphate to glucose in the endoplasmic reticulum. May form with the glucose-6-phosphate transporter (SLC37A4/G6PT) a ubiquitously expressed complex responsible for glucose production through glycogenolysis and gluconeogenesis. Probably required for normal neutrophil function. The chain is Glucose-6-phosphatase 3 (G6pc3) from Mus musculus (Mouse).